The following is a 199-amino-acid chain: Glycerol-3-phosphate acyltransferase (199 aa).

Transmembrane regions (helical) follow at residues 2 to 22, 77 to 97, 113 to 133, and 139 to 159; these read LEVLLVLLGYVLGSVPTGILV, PWVLAAVALAAVVGHCWPVFL, IALAPPVGLGMFALWWVVALA, and LAAMVVTVVSPFAFLLSGQPL.

It belongs to the PlsY family. As to quaternary structure, probably interacts with PlsX.

It localises to the cell membrane. It catalyses the reaction an acyl phosphate + sn-glycerol 3-phosphate = a 1-acyl-sn-glycero-3-phosphate + phosphate. The protein operates within lipid metabolism; phospholipid metabolism. In terms of biological role, catalyzes the transfer of an acyl group from acyl-phosphate (acyl-PO(4)) to glycerol-3-phosphate (G3P) to form lysophosphatidic acid (LPA). This enzyme utilizes acyl-phosphate as fatty acyl donor, but not acyl-CoA or acyl-ACP. The sequence is that of Glycerol-3-phosphate acyltransferase from Rubrobacter xylanophilus (strain DSM 9941 / JCM 11954 / NBRC 16129 / PRD-1).